The following is a 130-amino-acid chain: Small ribosomal subunit protein uS9 (130 aa).

Belongs to the universal ribosomal protein uS9 family.

This chain is Small ribosomal subunit protein uS9, found in Carboxydothermus hydrogenoformans (strain ATCC BAA-161 / DSM 6008 / Z-2901).